The following is a 543-amino-acid chain: Kelch repeat and BTB domain-containing protein 4 (543 aa).

The 68-residue stretch at 70-137 (ADVTISVEGR…IYHGTVKLRA (68 aa)) folds into the BTB domain. Positions 172-264 (CLQVMWLADR…SLKEIGENVH (93 aa)) constitute a BACK domain. Kelch repeat units lie at residues 264–310 (HIYL…KHGG), 311–353 (DLYV…SVPG), 356–403 (AIYS…NLNG), 405–455 (IYLL…VHKD), and 457–505 (VFIV…YVFR).

Component of the BCR(KBTBD4) E3 ubiquitin ligase complex, at least composed of CUL3, KBTBD4 and RBX1.

Functionally, substrate-specific adapter of a BCR (BTB-CUL3-RBX1) E3 ubiquitin ligase complex which targets CoREST corepressor complex components RCOR1, KDM1A/LSD1 and HDAC2 for proteasomal degradation. RCOR1 is likely to be the primary target while degradation of KDM1A and HDAC2 is likely due to their association with RCOR1. Also targets RCOR3, MIER2 and MIER3 for proteasomal degradation as well as associated proteins ZNF217 and RREB1. Degradation is dependent on the presence of an ELM2 domain in the target proteins. The sequence is that of Kelch repeat and BTB domain-containing protein 4 (KBTBD4) from Macaca fascicularis (Crab-eating macaque).